A 901-amino-acid chain; its full sequence is Mediator of RNA polymerase II transcription subunit 14 (901 aa).

The protein belongs to the Mediator complex subunit 14 family. Component of the Mediator complex.

The protein localises to the nucleus. Functionally, component of the Mediator complex, a coactivator involved in the regulated transcription of nearly all RNA polymerase II-dependent genes. Mediator functions as a bridge to convey information from gene-specific regulatory proteins to the basal RNA polymerase II transcription machinery. Mediator is recruited to promoters by direct interactions with regulatory proteins and serves as a scaffold for the assembly of a functional preinitiation complex with RNA polymerase II and the general transcription factors. The polypeptide is Mediator of RNA polymerase II transcription subunit 14 (RGR1) (Yarrowia lipolytica (strain CLIB 122 / E 150) (Yeast)).